Here is a 118-residue protein sequence, read N- to C-terminus: Small ribosomal subunit protein uS13 (118 aa).

The segment at 94–118 (SLPVRGQRTKTNARTRKGPRKPIKK) is disordered.

This sequence belongs to the universal ribosomal protein uS13 family. As to quaternary structure, part of the 30S ribosomal subunit. Forms a loose heterodimer with protein S19. Forms two bridges to the 50S subunit in the 70S ribosome.

In terms of biological role, located at the top of the head of the 30S subunit, it contacts several helices of the 16S rRNA. In the 70S ribosome it contacts the 23S rRNA (bridge B1a) and protein L5 of the 50S subunit (bridge B1b), connecting the 2 subunits; these bridges are implicated in subunit movement. Contacts the tRNAs in the A and P-sites. The sequence is that of Small ribosomal subunit protein uS13 from Haemophilus influenzae (strain 86-028NP).